A 328-amino-acid polypeptide reads, in one-letter code: Fructokinase-2 (328 aa).

The protein belongs to the carbohydrate kinase PfkB family.

It carries out the reaction D-fructose + ATP = D-fructose 6-phosphate + ADP + H(+). The protein operates within glycan biosynthesis; starch biosynthesis. Functionally, may play an important role in maintaining the flux of carbon towards starch formation. The protein is Fructokinase-2 (FRK2) of Solanum lycopersicum (Tomato).